The following is a 69-amino-acid chain: DNA gyrase inhibitor YacG (69 aa).

Positions 7, 10, 26, and 30 each coordinate Zn(2+).

This sequence belongs to the DNA gyrase inhibitor YacG family. In terms of assembly, interacts with GyrB. The cofactor is Zn(2+).

Functionally, inhibits all the catalytic activities of DNA gyrase by preventing its interaction with DNA. Acts by binding directly to the C-terminal domain of GyrB, which probably disrupts DNA binding by the gyrase. The polypeptide is DNA gyrase inhibitor YacG (Shewanella sp. (strain ANA-3)).